The chain runs to 404 residues: MKRTIIMMLDSFGVGASADAASFGDVGSDTFGHIAKACAEGKADIGREGPLKLPNLARLGLGHAAMESTGAFAPGFGDNVELIGAYGHAQELSSGKDTPSGHWEMAGVPVLFEWGYFSEHQNSFPKELTDKILARAGLDGFLGNCHASGTTILEELGEEHMRSGKPIFYTSADSVFQIACHEETFGLDNLYRLCEITREELAPYNIGRVIARPFNGTGPSDFARTGNRKDYSLEPPAKTVLDKLKAAGGEVVSVGKIADIYAYCGITKKVKANGLEDLFDATLAEVKSAGDNTIVFTNFVDFDSHYGHRRDVAGYAKGLEYFDARLPEMLALLGEDDLLILTADHGCDPTWQGTDHTREYVPVLAYGAGLKAGSLGRRNSFADIGQSIASHFKLEPMAYGESFI.

The Mn(2+) site is built by Asp10, Asp303, His308, Asp344, His345, and His356.

It belongs to the phosphopentomutase family. Requires Mn(2+) as cofactor.

Its subcellular location is the cytoplasm. It catalyses the reaction 2-deoxy-alpha-D-ribose 1-phosphate = 2-deoxy-D-ribose 5-phosphate. The catalysed reaction is alpha-D-ribose 1-phosphate = D-ribose 5-phosphate. It functions in the pathway carbohydrate degradation; 2-deoxy-D-ribose 1-phosphate degradation; D-glyceraldehyde 3-phosphate and acetaldehyde from 2-deoxy-alpha-D-ribose 1-phosphate: step 1/2. Isomerase that catalyzes the conversion of deoxy-ribose 1-phosphate (dRib-1-P) and ribose 1-phosphate (Rib-1-P) to deoxy-ribose 5-phosphate (dRib-5-P) and ribose 5-phosphate (Rib-5-P), respectively. In Shewanella sp. (strain W3-18-1), this protein is Phosphopentomutase.